A 67-amino-acid polypeptide reads, in one-letter code: MSLFPVFVVFGLSFPPIFFELILSLAIFWLVRKLLAPTGIYDFVWHPALFNTALYCCLFYLISRMFV.

The next 2 helical transmembrane spans lie at 3–23 (LFPV…ELIL) and 43–63 (FVWH…YLIS).

This sequence belongs to the AaeX family.

It localises to the cell membrane. The chain is Protein AaeX from Enterobacter sp. (strain 638).